We begin with the raw amino-acid sequence, 1073 residues long: Pleckstrin homology domain-containing family G member 5 (1073 aa).

5 disordered regions span residues 1–28, 91–135, 217–261, 278–309, and 367–388; these read MGTGPGVSGRRAAARPSSELPSPDSQLL, VSTR…ARRR, PGDE…ESSL, GEAGIPGHEPPAPSSCSLPVGSSGGTSSGINE, and SWEEEEEDDEEDEESSGLRLED. 2 stretches are compositionally biased toward basic and acidic residues: residues 217 to 231 and 249 to 260; these read PGDEGKVEQGVKDSK and ERVDPQSRRESS. Residues 367–381 show a composition bias toward acidic residues; that stretch reads SWEEEEEDDEEDEES. One can recognise a DH domain in the interval 406–598; the sequence is HQQEAVWELL…ERFIHHVNTC (193 aa). Positions 654-754 constitute a PH domain; it reads QLLLEGSLRM…WVDTIYNAQN (101 aa). Disordered regions lie at residues 762–818, 833–873, and 899–925; these read QLSA…TSDG, TLSS…GPVD, and PVVEPAPVPQTPSPQPSPRLRRRTPVQ. Residues 777-790 are compositionally biased toward acidic residues; it reads LEEEEDEQEEEGEE. Composition is skewed to polar residues over residues 791-809 and 844-864; these read SGTSAASSPTILRKSSNSL and VSSQSDESSLSNTASSVTPTS. At Thr-793 the chain carries Phosphothreonine. Ser-798 is subject to Phosphoserine. The segment covering 900–915 has biased composition (pro residues); that stretch reads VVEPAPVPQTPSPQPS. The residue at position 909 (Thr-909) is a Phosphothreonine. Residues Ser-911, Ser-936, and Ser-941 each carry the phosphoserine modification. The disordered stretch occupies residues 993 to 1046; that stretch reads MCDPCHGPQLSESENRPSHMTGGPADSARRRCREMPSGTMSRVQSEPPSGVSAQ. The segment covering 1030 to 1039 has biased composition (polar residues); it reads GTMSRVQSEP.

As to quaternary structure, interacts with GIPC1/synectin and RHOA. As to expression, expressed in neurons and glial cells of the peripheral nervous system, with highest levels of expression in the brain and sciatic nerve endoneurium. Isoform 2 is expressed at detectable levels only in malignant cells.

It localises to the cytoplasm. Its subcellular location is the perinuclear region. It is found in the cell membrane. The protein localises to the cell junction. The protein resides in the cell projection. It localises to the lamellipodium. Functionally, functions as a guanine exchange factor (GEF) for RAB26 and thus regulates autophagy of synaptic vesicles in axon terminal of motoneurons. Involved in the control of neuronal cell differentiation. Plays a role in angiogenesis through regulation of endothelial cells chemotaxis. Also affects the migration, adhesion, and matrix/bone degradation in macrophages and osteoclasts. The sequence is that of Pleckstrin homology domain-containing family G member 5 (Plekhg5) from Mus musculus (Mouse).